Here is a 245-residue protein sequence, read N- to C-terminus: 4-hydroxy-tetrahydrodipicolinate reductase (245 aa).

NAD(+)-binding positions include 7-12 (GAKGKV), 75-77 (GTT), and 102-105 (APNF). The active-site Proton donor/acceptor is His-132. Position 133 (His-133) interacts with (S)-2,3,4,5-tetrahydrodipicolinate. Catalysis depends on Lys-136, which acts as the Proton donor. 142-143 (GT) contacts (S)-2,3,4,5-tetrahydrodipicolinate.

It belongs to the DapB family.

The protein localises to the cytoplasm. The enzyme catalyses (S)-2,3,4,5-tetrahydrodipicolinate + NAD(+) + H2O = (2S,4S)-4-hydroxy-2,3,4,5-tetrahydrodipicolinate + NADH + H(+). It catalyses the reaction (S)-2,3,4,5-tetrahydrodipicolinate + NADP(+) + H2O = (2S,4S)-4-hydroxy-2,3,4,5-tetrahydrodipicolinate + NADPH + H(+). The protein operates within amino-acid biosynthesis; L-lysine biosynthesis via DAP pathway; (S)-tetrahydrodipicolinate from L-aspartate: step 4/4. In terms of biological role, catalyzes the conversion of 4-hydroxy-tetrahydrodipicolinate (HTPA) to tetrahydrodipicolinate. The chain is 4-hydroxy-tetrahydrodipicolinate reductase from Mycobacterium sp. (strain JLS).